The chain runs to 620 residues: Probable potassium transport system protein Kup (620 aa).

12 consecutive transmembrane segments (helical) span residues Leu-11–Phe-31, Ile-51–Val-71, Ile-100–Pro-120, Leu-138–Ala-158, Phe-167–Ile-187, Ala-202–Leu-222, Trp-246–Leu-266, Leu-288–Phe-308, Gly-334–Leu-354, Ala-364–Val-384, Val-396–Thr-416, and Leu-418–Ile-438.

It belongs to the HAK/KUP transporter (TC 2.A.72) family.

It localises to the cell inner membrane. It catalyses the reaction K(+)(in) + H(+)(in) = K(+)(out) + H(+)(out). Transport of potassium into the cell. Likely operates as a K(+):H(+) symporter. The chain is Probable potassium transport system protein Kup from Vibrio cholerae serotype O1 (strain ATCC 39315 / El Tor Inaba N16961).